We begin with the raw amino-acid sequence, 66 residues long: Large ribosomal subunit protein uL29 (66 aa).

Belongs to the universal ribosomal protein uL29 family.

This is Large ribosomal subunit protein uL29 from Mesorhizobium japonicum (strain LMG 29417 / CECT 9101 / MAFF 303099) (Mesorhizobium loti (strain MAFF 303099)).